Reading from the N-terminus, the 214-residue chain is Orotate phosphoribosyltransferase (214 aa).

5-phospho-alpha-D-ribose 1-diphosphate is bound at residue Lys-26. 34-35 (FF) provides a ligand contact to orotate. 5-phospho-alpha-D-ribose 1-diphosphate-binding positions include 72 to 73 (YK), Arg-99, Lys-100, Lys-103, His-105, and 124 to 132 (DDVITAGTA). Residues Thr-128 and Arg-156 each contribute to the orotate site.

It belongs to the purine/pyrimidine phosphoribosyltransferase family. PyrE subfamily. Homodimer. The cofactor is Mg(2+).

It catalyses the reaction orotidine 5'-phosphate + diphosphate = orotate + 5-phospho-alpha-D-ribose 1-diphosphate. It functions in the pathway pyrimidine metabolism; UMP biosynthesis via de novo pathway; UMP from orotate: step 1/2. Catalyzes the transfer of a ribosyl phosphate group from 5-phosphoribose 1-diphosphate to orotate, leading to the formation of orotidine monophosphate (OMP). The protein is Orotate phosphoribosyltransferase of Mannheimia succiniciproducens (strain KCTC 0769BP / MBEL55E).